We begin with the raw amino-acid sequence, 207 residues long: LexA repressor (207 aa).

Residues 28-48 (VREIGEAVGLASSSTVHGHLA) constitute a DNA-binding region (H-T-H motif). Residues Ser-129 and Lys-167 each act as for autocatalytic cleavage activity in the active site.

This sequence belongs to the peptidase S24 family. In terms of assembly, homodimer.

It carries out the reaction Hydrolysis of Ala-|-Gly bond in repressor LexA.. Its function is as follows. Represses a number of genes involved in the response to DNA damage (SOS response), including recA and lexA. In the presence of single-stranded DNA, RecA interacts with LexA causing an autocatalytic cleavage which disrupts the DNA-binding part of LexA, leading to derepression of the SOS regulon and eventually DNA repair. This is LexA repressor from Geobacillus kaustophilus (strain HTA426).